Consider the following 118-residue polypeptide: Holo-[acyl-carrier-protein] synthase (118 aa).

Mg(2+) is bound by residues Asp-8 and Glu-58.

It belongs to the P-Pant transferase superfamily. AcpS family. It depends on Mg(2+) as a cofactor.

It is found in the cytoplasm. It carries out the reaction apo-[ACP] + CoA = holo-[ACP] + adenosine 3',5'-bisphosphate + H(+). Transfers the 4'-phosphopantetheine moiety from coenzyme A to a Ser of acyl-carrier-protein. The sequence is that of Holo-[acyl-carrier-protein] synthase from Streptococcus pyogenes serotype M12 (strain MGAS2096).